The following is a 282-amino-acid chain: Undecaprenyl-diphosphatase (282 aa).

7 helical membrane-spanning segments follow: residues 39–59, 85–105, 115–135, 153–173, 196–216, 230–250, and 260–280; these read PGAA…LIYF, ATMG…GLLF, SLYW…LTEV, IGWK…IPGS, FSFL…LYET, LLVA…FLIT, and FIIY…TGAI.

The protein belongs to the UppP family.

It localises to the cell inner membrane. It catalyses the reaction di-trans,octa-cis-undecaprenyl diphosphate + H2O = di-trans,octa-cis-undecaprenyl phosphate + phosphate + H(+). Functionally, catalyzes the dephosphorylation of undecaprenyl diphosphate (UPP). Confers resistance to bacitracin. This is Undecaprenyl-diphosphatase from Chlorobium chlorochromatii (strain CaD3).